A 1342-amino-acid chain; its full sequence is DNA-directed RNA polymerase subunit beta (1342 aa).

The protein belongs to the RNA polymerase beta chain family. In terms of assembly, the RNAP catalytic core consists of 2 alpha, 1 beta, 1 beta' and 1 omega subunit. When a sigma factor is associated with the core the holoenzyme is formed, which can initiate transcription.

The catalysed reaction is RNA(n) + a ribonucleoside 5'-triphosphate = RNA(n+1) + diphosphate. DNA-dependent RNA polymerase catalyzes the transcription of DNA into RNA using the four ribonucleoside triphosphates as substrates. The sequence is that of DNA-directed RNA polymerase subunit beta from Aliivibrio fischeri (strain ATCC 700601 / ES114) (Vibrio fischeri).